The primary structure comprises 346 residues: Holliday junction branch migration complex subunit RuvB (346 aa).

The interval 1–182 (MSEPARLISP…FGIPVRLSFY (182 aa)) is large ATPase domain (RuvB-L). ATP contacts are provided by residues L21, R22, G63, K66, T67, T68, 129–131 (EDF), R172, Y182, and R219. T67 contributes to the Mg(2+) binding site. The segment at 183–253 (TVEELELIVR…IADEALTRLL (71 aa)) is small ATPAse domain (RuvB-S). The interval 256–346 (NVGFDQLDKR…AQFRLFQEDD (91 aa)) is head domain (RuvB-H). DNA is bound by residues R292, R311, and R316.

Belongs to the RuvB family. As to quaternary structure, homohexamer. Forms an RuvA(8)-RuvB(12)-Holliday junction (HJ) complex. HJ DNA is sandwiched between 2 RuvA tetramers; dsDNA enters through RuvA and exits via RuvB. An RuvB hexamer assembles on each DNA strand where it exits the tetramer. Each RuvB hexamer is contacted by two RuvA subunits (via domain III) on 2 adjacent RuvB subunits; this complex drives branch migration. In the full resolvosome a probable DNA-RuvA(4)-RuvB(12)-RuvC(2) complex forms which resolves the HJ.

The protein resides in the cytoplasm. The catalysed reaction is ATP + H2O = ADP + phosphate + H(+). Its function is as follows. The RuvA-RuvB-RuvC complex processes Holliday junction (HJ) DNA during genetic recombination and DNA repair, while the RuvA-RuvB complex plays an important role in the rescue of blocked DNA replication forks via replication fork reversal (RFR). RuvA specifically binds to HJ cruciform DNA, conferring on it an open structure. The RuvB hexamer acts as an ATP-dependent pump, pulling dsDNA into and through the RuvAB complex. RuvB forms 2 homohexamers on either side of HJ DNA bound by 1 or 2 RuvA tetramers; 4 subunits per hexamer contact DNA at a time. Coordinated motions by a converter formed by DNA-disengaged RuvB subunits stimulates ATP hydrolysis and nucleotide exchange. Immobilization of the converter enables RuvB to convert the ATP-contained energy into a lever motion, pulling 2 nucleotides of DNA out of the RuvA tetramer per ATP hydrolyzed, thus driving DNA branch migration. The RuvB motors rotate together with the DNA substrate, which together with the progressing nucleotide cycle form the mechanistic basis for DNA recombination by continuous HJ branch migration. Branch migration allows RuvC to scan DNA until it finds its consensus sequence, where it cleaves and resolves cruciform DNA. In Rhizobium etli (strain CIAT 652), this protein is Holliday junction branch migration complex subunit RuvB.